We begin with the raw amino-acid sequence, 366 residues long: Mitochondrial division protein fszB (366 aa).

GTP-binding positions include Gly-70 to Asn-74, Gly-157 to Gly-159, Glu-190, and Asp-238.

Belongs to the FtsZ family.

It is found in the mitochondrion. Probably involved in mitochondrion division process. Binds to and hydrolyzes GTP. The chain is Mitochondrial division protein fszB (fszB) from Dictyostelium discoideum (Social amoeba).